The primary structure comprises 541 residues: Membrane protein insertase YidC (541 aa).

Residues 6 to 26 (SLLVLALIFISFLVYQQWQLD) traverse the membrane as a helical segment. The interval 34–56 (EQTTSITATSDVPASSPSNSQAI) is disordered. The next 4 membrane-spanning stretches (helical) occupy residues 337-357 (FWLL…IICV), 416-436 (LGGC…YWTF), 454-474 (LSAQ…MFLL), and 495-515 (PLIF…YWLV).

This sequence belongs to the OXA1/ALB3/YidC family. Type 1 subfamily. In terms of assembly, interacts with the Sec translocase complex via SecD. Specifically interacts with transmembrane segments of nascent integral membrane proteins during membrane integration.

Its subcellular location is the cell inner membrane. Functionally, required for the insertion and/or proper folding and/or complex formation of integral membrane proteins into the membrane. Involved in integration of membrane proteins that insert both dependently and independently of the Sec translocase complex, as well as at least some lipoproteins. Aids folding of multispanning membrane proteins. The sequence is that of Membrane protein insertase YidC from Haemophilus influenzae (strain PittEE).